A 262-amino-acid polypeptide reads, in one-letter code: 3-deoxy-manno-octulosonate cytidylyltransferase (262 aa).

It belongs to the KdsB family.

It localises to the cytoplasm. It catalyses the reaction 3-deoxy-alpha-D-manno-oct-2-ulosonate + CTP = CMP-3-deoxy-beta-D-manno-octulosonate + diphosphate. Its pathway is nucleotide-sugar biosynthesis; CMP-3-deoxy-D-manno-octulosonate biosynthesis; CMP-3-deoxy-D-manno-octulosonate from 3-deoxy-D-manno-octulosonate and CTP: step 1/1. It functions in the pathway bacterial outer membrane biogenesis; lipopolysaccharide biosynthesis. Functionally, activates KDO (a required 8-carbon sugar) for incorporation into bacterial lipopolysaccharide in Gram-negative bacteria. The polypeptide is 3-deoxy-manno-octulosonate cytidylyltransferase (Acidovorax ebreus (strain TPSY) (Diaphorobacter sp. (strain TPSY))).